The sequence spans 65 residues: Conotoxin VnMLCL-041 (65 aa).

The first 19 residues, 1 to 19 (MLCLPVFIILLLLASPAAP), serve as a signal peptide directing secretion. Residues 20-43 (NPLQTRIQSNLIRAGPEDANIKTD) constitute a propeptide that is removed on maturation. Lys-64 carries the lysine amide modification.

This sequence belongs to the conotoxin T superfamily. Expressed by the venom duct.

The protein localises to the secreted. This is Conotoxin VnMLCL-041 from Conus ventricosus (Mediterranean cone).